A 171-amino-acid polypeptide reads, in one-letter code: Lipoprotein signal peptidase (171 aa).

The next 2 helical transmembrane spans lie at 67–87 (YALLGLTLAATIFMILWLWRS) and 88–108 (TSKLIACALGLIIGGALGNAY). Active-site residues include D118 and D136. The chain crosses the membrane as a helical span at residues 127-147 (FSWYVFNLADAAIVAGVALLL).

It belongs to the peptidase A8 family.

It is found in the cell inner membrane. It catalyses the reaction Release of signal peptides from bacterial membrane prolipoproteins. Hydrolyzes -Xaa-Yaa-Zaa-|-(S,diacylglyceryl)Cys-, in which Xaa is hydrophobic (preferably Leu), and Yaa (Ala or Ser) and Zaa (Gly or Ala) have small, neutral side chains.. The protein operates within protein modification; lipoprotein biosynthesis (signal peptide cleavage). In terms of biological role, this protein specifically catalyzes the removal of signal peptides from prolipoproteins. This is Lipoprotein signal peptidase from Methylocella silvestris (strain DSM 15510 / CIP 108128 / LMG 27833 / NCIMB 13906 / BL2).